Reading from the N-terminus, the 144-residue chain is Alpha-crystallin (144 aa).

The sHSP domain occupies 33–143 (PTFDTRLMRL…TEKHIQIRST (111 aa)).

It belongs to the small heat shock protein (HSP20) family.

The protein resides in the secreted. Its subcellular location is the cell wall. The protein localises to the cytoplasm. In terms of biological role, acts as a chaperone. The sequence is that of Alpha-crystallin (hspX) from Mycobacterium bovis (strain ATCC BAA-935 / AF2122/97).